Here is a 184-residue protein sequence, read N- to C-terminus: Small ribosomal subunit protein bS16 (184 aa).

Over residues Lys150 to Ala160 the composition is skewed to basic and acidic residues. The segment at Lys150–Glu184 is disordered. Positions Pro164–Ala173 are enriched in acidic residues. A compositionally biased stretch (low complexity) spans Glu174 to Glu184.

The protein belongs to the bacterial ribosomal protein bS16 family.

The chain is Small ribosomal subunit protein bS16 from Bacteroides thetaiotaomicron (strain ATCC 29148 / DSM 2079 / JCM 5827 / CCUG 10774 / NCTC 10582 / VPI-5482 / E50).